Consider the following 124-residue polypeptide: Ribonuclease pancreatic (124 aa).

The span at 1-13 (KESAAAKFERQHM) shows a compositional bias: basic and acidic residues. The disordered stretch occupies residues 1–25 (KESAAAKFERQHMDPSPSSASSSNY). Residues K7 and R10 each contribute to the substrate site. The active-site Proton acceptor is the H12. 4 disulfide bridges follow: C26–C84, C40–C95, C58–C110, and C65–C72. A glycan (N-linked (GlcNAc...) asparagine; partial) is linked at N34. Residues 41–45 (KPVNT), K66, and R85 each bind substrate. H119 serves as the catalytic Proton donor.

This sequence belongs to the pancreatic ribonuclease family. In terms of assembly, monomer. Interacts with and forms tight 1:1 complexes with RNH1. Dimerization of two such complexes may occur. Interaction with RNH1 inhibits this protein. Pancreas.

It localises to the secreted. It catalyses the reaction an [RNA] containing cytidine + H2O = an [RNA]-3'-cytidine-3'-phosphate + a 5'-hydroxy-ribonucleotide-3'-[RNA].. The enzyme catalyses an [RNA] containing uridine + H2O = an [RNA]-3'-uridine-3'-phosphate + a 5'-hydroxy-ribonucleotide-3'-[RNA].. In terms of biological role, endonuclease that catalyzes the cleavage of RNA on the 3' side of pyrimidine nucleotides. Acts on single-stranded and double-stranded RNA. This Capreolus capreolus (European roe deer) protein is Ribonuclease pancreatic (RNASE1).